The sequence spans 82 residues: U16-lycotoxin-Ls1a (82 aa).

The N-terminal stretch at 1 to 22 (MSPKVQALLLLVGLITFLAVHA) is a signal peptide. The propeptide occupies 23–34 (EEELSETVESER). 4 cysteine pairs are disulfide-bonded: cysteine 36-cysteine 51, cysteine 43-cysteine 56, cysteine 50-cysteine 67, and cysteine 58-cysteine 65.

The protein belongs to the neurotoxin 02 (plectoxin) family. 04 (U16-lycotoxin) subfamily. As to expression, expressed by the venom gland.

It is found in the secreted. This is U16-lycotoxin-Ls1a from Lycosa singoriensis (Wolf spider).